The following is an 889-amino-acid chain: Alanine--tRNA ligase (889 aa).

4 residues coordinate Zn(2+): histidine 569, histidine 573, cysteine 671, and histidine 675.

Belongs to the class-II aminoacyl-tRNA synthetase family. Requires Zn(2+) as cofactor.

It localises to the cytoplasm. It catalyses the reaction tRNA(Ala) + L-alanine + ATP = L-alanyl-tRNA(Ala) + AMP + diphosphate. Functionally, catalyzes the attachment of alanine to tRNA(Ala) in a two-step reaction: alanine is first activated by ATP to form Ala-AMP and then transferred to the acceptor end of tRNA(Ala). Also edits incorrectly charged Ser-tRNA(Ala) and Gly-tRNA(Ala) via its editing domain. This chain is Alanine--tRNA ligase, found in Synechococcus sp. (strain CC9605).